A 278-amino-acid chain; its full sequence is Dermonecrotic toxin LspiSicTox-betaIE2ii (278 aa).

Residue His5 is part of the active site. Mg(2+) is bound by residues Glu25 and Asp27. The active-site Nucleophile is the His41. Intrachain disulfides connect Cys45–Cys51 and Cys47–Cys190. Asp85 is a binding site for Mg(2+).

It belongs to the arthropod phospholipase D family. Class II subfamily. Requires Mg(2+) as cofactor. In terms of tissue distribution, expressed by the venom gland.

It is found in the secreted. It carries out the reaction an N-(acyl)-sphingosylphosphocholine = an N-(acyl)-sphingosyl-1,3-cyclic phosphate + choline. The enzyme catalyses an N-(acyl)-sphingosylphosphoethanolamine = an N-(acyl)-sphingosyl-1,3-cyclic phosphate + ethanolamine. It catalyses the reaction a 1-acyl-sn-glycero-3-phosphocholine = a 1-acyl-sn-glycero-2,3-cyclic phosphate + choline. The catalysed reaction is a 1-acyl-sn-glycero-3-phosphoethanolamine = a 1-acyl-sn-glycero-2,3-cyclic phosphate + ethanolamine. Functionally, dermonecrotic toxins cleave the phosphodiester linkage between the phosphate and headgroup of certain phospholipids (sphingolipid and lysolipid substrates), forming an alcohol (often choline) and a cyclic phosphate. This toxin acts on sphingomyelin (SM). It may also act on ceramide phosphoethanolamine (CPE), lysophosphatidylcholine (LPC) and lysophosphatidylethanolamine (LPE), but not on lysophosphatidylserine (LPS), and lysophosphatidylglycerol (LPG). It acts by transphosphatidylation, releasing exclusively cyclic phosphate products as second products. Induces dermonecrosis, hemolysis, increased vascular permeability, edema, inflammatory response, and platelet aggregation. The chain is Dermonecrotic toxin LspiSicTox-betaIE2ii from Loxosceles spinulosa (Recluse spider).